Reading from the N-terminus, the 35-residue chain is Photosystem I reaction center subunit Z (35 aa).

A helical transmembrane segment spans residues 10 to 30 (LVIITTLVVPFMAAAALLFII).

In terms of assembly, the G.violaceus PSI reaction center is composed of one copy each of PsaA,B,C,D,E,F,L,M and Z, and forms trimeric complexes.

The protein resides in the cell inner membrane. The chain is Photosystem I reaction center subunit Z (psaZ) from Gloeobacter violaceus (strain ATCC 29082 / PCC 7421).